A 531-amino-acid chain; its full sequence is 2-isopropylmalate synthase (531 aa).

Residues 8–284 (IIIFDTTLRD…LTNIDTKQIY (277 aa)) enclose the Pyruvate carboxyltransferase domain. Residues aspartate 17, histidine 208, histidine 210, and asparagine 244 each contribute to the Mn(2+) site. Residues 408 to 531 (RVELVQVSCG…TQDKQTEVTA (124 aa)) form a regulatory domain region.

The protein belongs to the alpha-IPM synthase/homocitrate synthase family. LeuA type 1 subfamily. Homodimer. Mn(2+) serves as cofactor.

It localises to the cytoplasm. It carries out the reaction 3-methyl-2-oxobutanoate + acetyl-CoA + H2O = (2S)-2-isopropylmalate + CoA + H(+). Its pathway is amino-acid biosynthesis; L-leucine biosynthesis; L-leucine from 3-methyl-2-oxobutanoate: step 1/4. Functionally, catalyzes the condensation of the acetyl group of acetyl-CoA with 3-methyl-2-oxobutanoate (2-ketoisovalerate) to form 3-carboxy-3-hydroxy-4-methylpentanoate (2-isopropylmalate). In Trichormus variabilis (strain ATCC 29413 / PCC 7937) (Anabaena variabilis), this protein is 2-isopropylmalate synthase.